The following is a 348-amino-acid chain: UDP-glucose 4-epimerase (348 aa).

NAD(+)-binding positions include 12–14, 33–37, 66–67, Phe-88, and Lys-92; these read GYI, DNFHN, and DI. Residue 132 to 134 participates in substrate binding; sequence SAT. The active-site Proton acceptor is the Tyr-157. NAD(+) contacts are provided by Lys-161 and Tyr-185. Residues 185–187, 206–208, 224–226, Arg-239, and 300–303 each bind substrate; these read YFN, NNL, NVF, and REGD.

The protein belongs to the NAD(P)-dependent epimerase/dehydratase family. As to quaternary structure, homodimer. Requires NAD(+) as cofactor.

The enzyme catalyses UDP-alpha-D-glucose = UDP-alpha-D-galactose. It catalyses the reaction UDP-N-acetyl-alpha-D-glucosamine = UDP-N-acetyl-alpha-D-galactosamine. The protein operates within carbohydrate metabolism; galactose metabolism. Catalyzes two distinct but analogous reactions: the reversible epimerization of UDP-glucose to UDP-galactose and the reversible epimerization of UDP-N-acetylglucosamine to UDP-N-acetylgalactosamine. The reaction with UDP-Gal plays a critical role in the Leloir pathway of galactose catabolism in which galactose is converted to the glycolytic intermediate glucose 6-phosphate. It contributes to the catabolism of dietary galactose and enables the endogenous biosynthesis of both UDP-Gal and UDP-GalNAc when exogenous sources are limited. Both UDP-sugar interconversions are important in the synthesis of glycoproteins and glycolipids. This chain is UDP-glucose 4-epimerase, found in Bos taurus (Bovine).